A 101-amino-acid chain; its full sequence is MISLNHYLIVAALMFVIGLVGVMKRQNLIMLFFSTEILLNAANVALVAISSFYNDIGGQIFAMFIIAIAASEMAVGLGLLILWYKKRHSIEIDSLSTMRDE.

A run of 3 helical transmembrane segments spans residues Ile-2–Val-22, Ile-29–Ile-49, and Met-63–Trp-83.

The protein belongs to the complex I subunit 4L family. As to quaternary structure, NDH-1 is composed of 14 different subunits. Subunits NuoA, H, J, K, L, M, N constitute the membrane sector of the complex.

The protein resides in the cell inner membrane. The catalysed reaction is a quinone + NADH + 5 H(+)(in) = a quinol + NAD(+) + 4 H(+)(out). Functionally, NDH-1 shuttles electrons from NADH, via FMN and iron-sulfur (Fe-S) centers, to quinones in the respiratory chain. The immediate electron acceptor for the enzyme in this species is believed to be ubiquinone. Couples the redox reaction to proton translocation (for every two electrons transferred, four hydrogen ions are translocated across the cytoplasmic membrane), and thus conserves the redox energy in a proton gradient. This Campylobacter hominis (strain ATCC BAA-381 / DSM 21671 / CCUG 45161 / LMG 19568 / NCTC 13146 / CH001A) protein is NADH-quinone oxidoreductase subunit K.